A 424-amino-acid chain; its full sequence is Virion nicking-joining enzyme (424 aa).

PLD phosphodiesterase domains follow at residues 110–137 (LGGV…DWRS) and 320–346 (YSRV…TGNY).

The protein belongs to the orthopoxvirus OPG042 family.

The protein localises to the virion. Its function is as follows. DNA nicking enzyme that cleaves extruded cruciform DNA at its tip. Probably nicks viral hairpins. This is Virion nicking-joining enzyme (OPG042) from Homo sapiens (Human).